The following is a 267-amino-acid chain: Ras-related protein Rab-36 (267 aa).

The GTP site is built by Val68, Gly69, Lys70, Thr71, Ser72, Asp83, Tyr86, and Thr89. Thr71 is a binding site for Mg(2+). A Switch 1 motif is present at residues 76–94 (RFCKNVFDRDYKATIGVDF). Mg(2+) contacts are provided by Thr89 and Asp112. Positions 113 to 132 (TAGQEKFKCIASAYYRGAQV) match the Switch 2 motif. Residues Gly115, Lys172, Asp174, Ser203, Ala204, and Lys205 each coordinate GTP. The segment at 243–267 (GDLIQMEGSPPETQESKRPSSLGCC) is disordered. 2 S-geranylgeranyl cysteine lipidation sites follow: Cys266 and Cys267.

Belongs to the small GTPase superfamily. Rab family. Mg(2+) serves as cofactor. Ubiquitously present in all tissues examined.

The protein resides in the golgi apparatus membrane. The enzyme catalyses GTP + H2O = GDP + phosphate + H(+). Its activity is regulated as follows. Regulated by guanine nucleotide exchange factors (GEFs) which promote the exchange of bound GDP for free GTP. Regulated by GTPase activating proteins (GAPs) which increase the GTP hydrolysis activity. Inhibited by GDP dissociation inhibitors (GDIs). Functionally, the small GTPases Rab are key regulators of intracellular membrane trafficking, from the formation of transport vesicles to their fusion with membranes. Rabs cycle between an inactive GDP-bound form and an active GTP-bound form that is able to recruit to membranes different sets of downstream effectors directly responsible for vesicle formation, movement, tethering and fusion. The sequence is that of Ras-related protein Rab-36 from Homo sapiens (Human).